The sequence spans 547 residues: Vacuolar fusion protein MON1 homolog B (547 aa).

Methionine 1 is modified (N-acetylmethionine). Residues 1-106 are disordered; sequence MEAGGDTAAP…GGDPSDEEWR (106 aa). Residues 57 to 66 show a composition bias toward pro residues; sequence PPSPSPPPQS. 2 positions are modified to phosphoserine: serine 59 and serine 61.

This sequence belongs to the MON1/SAND family. In terms of assembly, interacts with CCNT2; down-regulates CCNT2-mediated activation of viral promoters during herpes simplex virus 1/HHV-1 infection. Found in a complex with RMC1, CCZ1 MON1A and MON1B.

This is Vacuolar fusion protein MON1 homolog B (MON1B) from Macaca fascicularis (Crab-eating macaque).